The primary structure comprises 385 residues: MKKVEILKTSRPSSAGGAARPSTASPTHGAPKIAIKTRPVADDVAPTAATVIEPSQKAMKESVRFLTDFGEISDAISDLLTSSPNFNVISAIGPQGAGKSTLLSMLAGNNSRQMYREYVFRPVSREANEQSRHQTIQIDIYIVNHQIFLDCQPMYSFSIMEGLPKVRGGRFDDSTAMSDTLRLTAFLLYVSHTVLVVSETHYDKVIIDTLRVAEQIRPYLAIFRPKLAIDRKTNLVFIKTKASSIDLAPTVIREREELLRLSFQDSRWLKVSQEPFKTLIVLEEIRVRREHLFEEGDEPDEAASLNEFDEQIAELREELQKNREDFTVETAAMDEKKWLDMCREVIRDKTLHKTLKEYQRAMTDGVRTHFDNGFHAERDANKFFS.

Positions 1–32 are disordered; that stretch reads MKKVEILKTSRPSSAGGAARPSTASPTHGAPK.

This sequence belongs to the SMG9 family.

Its function is as follows. Involved in nonsense-mediated decay (NMD) of mRNAs containing premature stop codons. Probable component of kinase complex containing smg-1 and recruited to stalled ribosomes. The chain is Nonsense-mediated mRNA decay factor SMG9 (smg-9) from Caenorhabditis elegans.